A 477-amino-acid polypeptide reads, in one-letter code: MPESRMPPRKLHIKSYGCQMNVYDAQRMADTLAVEGYVETTSAEDADLVILNTCHIREKASEKVYSELGRLRAAKDQAARDGRGMNIVVAGCVAQAEGEEIIRRAPMVDVVVGPQSYHHLPQLLARAKTCGRALETEFPVADKFGFLPQPSRQAIRSRGISAFVTVQEGCDKFCTFCVVPYTRGAEASRPVAKVVEDVRRLADNGVREITLIGQNVNAYHGEGPDGRPWPFGKLLYRLAGIPGIVRLRYSTSHPRDVEDTLIDAHRDLDALMPFVHLPVQSGSDRILAAMNRRHTADDYRRVIDRFRQARPDIAFSSDFIVGFPGETEEDFAATLALVGQIGYAAAYSFKYSPRPGTPAADMQETVSTADMDQRLVQLQNLIDSQQSAFNRTALGRTIDVLFDRAGRKPGQIVGRTAYLQPAHVEASDAIIGQVLPVTVASLERYSLFGTLASKPTSGEPSNHAATGGAQFQTTAGA.

The region spanning 9-129 (RKLHIKSYGC…LPQLLARAKT (121 aa)) is the MTTase N-terminal domain. Positions 18, 54, 92, 170, 174, and 177 each coordinate [4Fe-4S] cluster. One can recognise a Radical SAM core domain in the interval 156 to 386 (RSRGISAFVT…QLQNLIDSQQ (231 aa)). The 63-residue stretch at 391-453 (RTALGRTIDV…RYSLFGTLAS (63 aa)) folds into the TRAM domain. Residues 454–477 (KPTSGEPSNHAATGGAQFQTTAGA) form a disordered region. Low complexity predominate over residues 464–477 (AATGGAQFQTTAGA).

Belongs to the methylthiotransferase family. MiaB subfamily. Monomer. The cofactor is [4Fe-4S] cluster.

Its subcellular location is the cytoplasm. It catalyses the reaction N(6)-dimethylallyladenosine(37) in tRNA + (sulfur carrier)-SH + AH2 + 2 S-adenosyl-L-methionine = 2-methylsulfanyl-N(6)-dimethylallyladenosine(37) in tRNA + (sulfur carrier)-H + 5'-deoxyadenosine + L-methionine + A + S-adenosyl-L-homocysteine + 2 H(+). Its function is as follows. Catalyzes the methylthiolation of N6-(dimethylallyl)adenosine (i(6)A), leading to the formation of 2-methylthio-N6-(dimethylallyl)adenosine (ms(2)i(6)A) at position 37 in tRNAs that read codons beginning with uridine. In Nitrobacter winogradskyi (strain ATCC 25391 / DSM 10237 / CIP 104748 / NCIMB 11846 / Nb-255), this protein is tRNA-2-methylthio-N(6)-dimethylallyladenosine synthase.